The following is a 215-amino-acid chain: Transmembrane protein 267 (215 aa).

Helical transmembrane passes span 77-97 (FGEV…HFFQ), 114-134 (FLHC…AVHL), and 178-198 (SSFY…LMYL).

It localises to the membrane. This chain is Transmembrane protein 267, found in Mus musculus (Mouse).